A 598-amino-acid chain; its full sequence is Inactive metallocarboxypeptidase ECM14 (598 aa).

The first 21 residues, 1–21, serve as a signal peptide directing secretion; it reads MRLFTHGQVLALLAFVNTISA. The propeptide occupies 22 to 174; it reads IPSFSTNSYP…QTIYESYPSP (153 aa). A Peptidase M14 domain is found at 202 to 522; that stretch reads NYQPLSVIVP…NAVMMLGRFL (321 aa). Residues H264 and E267 each coordinate Zn(2+). Substrate is bound by residues 264–267, R322, and 339–340; these read HARE and DR. C333 and C356 are oxidised to a cystine. N-linked (GlcNAc...) asparagine glycosylation occurs at N349. H396 is a binding site for Zn(2+). Position 397–398 (397–398) interacts with substrate; that stretch reads SY. The disordered stretch occupies residues 539–598; that stretch reads QRPNKDDKPILNDDDDDDDADTNDDGIGRKDDSWIPDEYKGDNDRDESDGGWAFRRLRKR. Residues 550–562 are compositionally biased toward acidic residues; it reads NDDDDDDDADTND. Residues 564–581 show a composition bias toward basic and acidic residues; it reads GIGRKDDSWIPDEYKGDN.

It belongs to the peptidase M14 family. Zn(2+) serves as cofactor.

The protein localises to the vacuole. It localises to the secreted. In terms of biological role, inactive carboxypeptidase that may play a role in cell wall organization and biogenesis. The chain is Inactive metallocarboxypeptidase ECM14 (ECM14) from Ajellomyces capsulatus (strain H143) (Darling's disease fungus).